Reading from the N-terminus, the 369-residue chain is Nuclear hormone receptor family member nhr-64 (369 aa).

The segment at residues glutamate 67 to valine 142 is a DNA-binding region (nuclear receptor). 2 consecutive NR C4-type zinc fingers follow at residues glutamine 70–lysine 90 and proline 106–arginine 130. Residues proline 120 to asparagine 352 enclose the NR LBD domain.

The protein belongs to the nuclear hormone receptor family.

The protein resides in the nucleus. In terms of biological role, orphan nuclear receptor. The protein is Nuclear hormone receptor family member nhr-64 (nhr-64) of Caenorhabditis elegans.